A 145-amino-acid chain; its full sequence is uncharacterized protein (145 aa).

It belongs to the asfivirus K145R family.

The protein localises to the virion. This is an uncharacterized protein from African swine fever virus (isolate Tick/South Africa/Pretoriuskop Pr4/1996) (ASFV).